A 533-amino-acid polypeptide reads, in one-letter code: Adenine deaminase (533 aa).

Belongs to the metallo-dependent hydrolases superfamily. Adenine deaminase family. It depends on Mn(2+) as a cofactor.

It catalyses the reaction adenine + H2O + H(+) = hypoxanthine + NH4(+). The chain is Adenine deaminase from Sulfurovum sp. (strain NBC37-1).